The following is a 124-amino-acid chain: Holo-[acyl-carrier-protein] synthase (124 aa).

Residues D8 and E60 each coordinate Mg(2+).

Belongs to the P-Pant transferase superfamily. AcpS family. Mg(2+) is required as a cofactor.

Its subcellular location is the cytoplasm. It carries out the reaction apo-[ACP] + CoA = holo-[ACP] + adenosine 3',5'-bisphosphate + H(+). In terms of biological role, transfers the 4'-phosphopantetheine moiety from coenzyme A to a Ser of acyl-carrier-protein. The chain is Holo-[acyl-carrier-protein] synthase from Wolbachia pipientis subsp. Culex pipiens (strain wPip).